Reading from the N-terminus, the 529-residue chain is Berberine bridge enzyme-like 7 (529 aa).

The first 19 residues, 1–19 (MKEALSILCLALLVSVSEA), serve as a signal peptide directing secretion. A disulfide bond links Cys-32 and Cys-95. A glycan (N-linked (GlcNAc...) asparagine) is linked at Asn-52. Residues 69-247 (YSSPNFKKLL…LSWKINLVKV (179 aa)) form the FAD-binding PCMH-type domain. The 6-(S-cysteinyl)-8alpha-(pros-histidyl)-FAD (His-Cys) cross-link spans 110–172 (HDLEGLSYRS…QTLAFPAGVC (63 aa)). 3 N-linked (GlcNAc...) asparagine glycosylation sites follow: Asn-257, Asn-341, and Asn-439.

The protein belongs to the oxygen-dependent FAD-linked oxidoreductase family. It depends on FAD as a cofactor. In terms of processing, the FAD cofactor is bound via a bicovalent 6-S-cysteinyl, 8alpha-N1-histidyl FAD linkage.

It is found in the secreted. Its subcellular location is the cell wall. Probable flavin-dependent oxidoreductase. In Arabidopsis thaliana (Mouse-ear cress), this protein is Berberine bridge enzyme-like 7.